Consider the following 132-residue polypeptide: Large ribosomal subunit protein bL17 (132 aa).

This sequence belongs to the bacterial ribosomal protein bL17 family. Part of the 50S ribosomal subunit. Contacts protein L32.

In Cellvibrio japonicus (strain Ueda107) (Pseudomonas fluorescens subsp. cellulosa), this protein is Large ribosomal subunit protein bL17.